A 246-amino-acid chain; its full sequence is Probable transcriptional regulatory protein GK2594 (246 aa).

Belongs to the TACO1 family.

The protein localises to the cytoplasm. This is Probable transcriptional regulatory protein GK2594 from Geobacillus kaustophilus (strain HTA426).